The following is a 73-amino-acid chain: DNA-directed RNA polymerase subunit omega (73 aa).

Belongs to the RNA polymerase subunit omega family. As to quaternary structure, the RNAP catalytic core consists of 2 alpha, 1 beta, 1 beta' and 1 omega subunit. When a sigma factor is associated with the core the holoenzyme is formed, which can initiate transcription.

It carries out the reaction RNA(n) + a ribonucleoside 5'-triphosphate = RNA(n+1) + diphosphate. Its function is as follows. Promotes RNA polymerase assembly. Latches the N- and C-terminal regions of the beta' subunit thereby facilitating its interaction with the beta and alpha subunits. The protein is DNA-directed RNA polymerase subunit omega of Clostridium novyi (strain NT).